A 624-amino-acid polypeptide reads, in one-letter code: tRNA uridine 5-carboxymethylaminomethyl modification enzyme MnmG (624 aa).

FAD contacts are provided by residues 13 to 18 (GGGHAG), V125, and S180. 273-287 (GPRYCPSIEDKIVRF) is an NAD(+) binding site. Q370 contacts FAD.

Belongs to the MnmG family. In terms of assembly, homodimer. Heterotetramer of two MnmE and two MnmG subunits. It depends on FAD as a cofactor.

It localises to the cytoplasm. NAD-binding protein involved in the addition of a carboxymethylaminomethyl (cmnm) group at the wobble position (U34) of certain tRNAs, forming tRNA-cmnm(5)s(2)U34. In Legionella pneumophila subsp. pneumophila (strain Philadelphia 1 / ATCC 33152 / DSM 7513), this protein is tRNA uridine 5-carboxymethylaminomethyl modification enzyme MnmG.